Reading from the N-terminus, the 282-residue chain is NH(3)-dependent NAD(+) synthetase (282 aa).

An ATP-binding site is contributed by 51-58 (GISGGVDS). Aspartate 57 is a binding site for Mg(2+). Residue arginine 148 coordinates deamido-NAD(+). Residue threonine 168 participates in ATP binding. Glutamate 173 lines the Mg(2+) pocket. Deamido-NAD(+) contacts are provided by lysine 181 and aspartate 188. 2 residues coordinate ATP: lysine 197 and threonine 219. Deamido-NAD(+) is bound at residue 268–269 (HK).

This sequence belongs to the NAD synthetase family. In terms of assembly, homodimer.

It catalyses the reaction deamido-NAD(+) + NH4(+) + ATP = AMP + diphosphate + NAD(+) + H(+). The protein operates within cofactor biosynthesis; NAD(+) biosynthesis; NAD(+) from deamido-NAD(+) (ammonia route): step 1/1. In terms of biological role, catalyzes the ATP-dependent amidation of deamido-NAD to form NAD. Uses ammonia as a nitrogen source. The polypeptide is NH(3)-dependent NAD(+) synthetase (Burkholderia cenocepacia (strain HI2424)).